We begin with the raw amino-acid sequence, 124 residues long: Chorion class high-cysteine HCA protein 12 (124 aa).

The N-terminal stretch at 1 to 21 (MFTFALLLLCVQGCLIQNVYG) is a signal peptide. The tract at residues 22–35 (QCCGCGCGGGCGCG) is left arm. The segment at 36–83 (CYGGEGDGNVNVCGELPVCGETLVCGRVPICGGVCFKGPACASGCVSI) is central domain. The tract at residues 84-124 (CGRCCGCGCGGCGGCGCGCGGCGCGCGGCGGCGCGRRCCCC) is right arm (Gly- and Cys-rich tandem repeats).

Belongs to the chorion protein family.

In terms of biological role, this protein is one of many from the eggshell of the silk moth. The sequence is that of Chorion class high-cysteine HCA protein 12 from Bombyx mori (Silk moth).